A 123-amino-acid polypeptide reads, in one-letter code: Ribosome-binding factor A (123 aa).

It belongs to the RbfA family. Monomer. Binds 30S ribosomal subunits, but not 50S ribosomal subunits or 70S ribosomes.

Its subcellular location is the cytoplasm. Its function is as follows. One of several proteins that assist in the late maturation steps of the functional core of the 30S ribosomal subunit. Associates with free 30S ribosomal subunits (but not with 30S subunits that are part of 70S ribosomes or polysomes). Required for efficient processing of 16S rRNA. May interact with the 5'-terminal helix region of 16S rRNA. The polypeptide is Ribosome-binding factor A (Neisseria meningitidis serogroup C (strain 053442)).